The following is a 782-amino-acid chain: Endonuclease MutS2 (782 aa).

Residue 336 to 343 (GPNTGGKT) coordinates ATP. In terms of domain architecture, Smr spans 707–782 (LDLRGYRYEE…GFGVTVAELK (76 aa)).

It belongs to the DNA mismatch repair MutS family. MutS2 subfamily. Homodimer. Binds to stalled ribosomes, contacting rRNA.

Endonuclease that is involved in the suppression of homologous recombination and thus may have a key role in the control of bacterial genetic diversity. In terms of biological role, acts as a ribosome collision sensor, splitting the ribosome into its 2 subunits. Detects stalled/collided 70S ribosomes which it binds and splits by an ATP-hydrolysis driven conformational change. Acts upstream of the ribosome quality control system (RQC), a ribosome-associated complex that mediates the extraction of incompletely synthesized nascent chains from stalled ribosomes and their subsequent degradation. Probably generates substrates for RQC. This chain is Endonuclease MutS2, found in Staphylococcus carnosus (strain TM300).